The sequence spans 305 residues: Ribosomal RNA small subunit methyltransferase H (305 aa).

S-adenosyl-L-methionine is bound by residues 30-32 (GGH), Asp-49, Phe-74, Asp-96, and Gln-103.

Belongs to the methyltransferase superfamily. RsmH family.

It localises to the cytoplasm. The enzyme catalyses cytidine(1402) in 16S rRNA + S-adenosyl-L-methionine = N(4)-methylcytidine(1402) in 16S rRNA + S-adenosyl-L-homocysteine + H(+). Its function is as follows. Specifically methylates the N4 position of cytidine in position 1402 (C1402) of 16S rRNA. This Francisella tularensis subsp. mediasiatica (strain FSC147) protein is Ribosomal RNA small subunit methyltransferase H.